Reading from the N-terminus, the 366-residue chain is Chorismate synthase (366 aa).

2 residues coordinate NADP(+): arginine 48 and arginine 54. Residues 125–127 (RSS), 238–239 (NA), glycine 278, 293–297 (KPTSS), and arginine 319 each bind FMN.

The protein belongs to the chorismate synthase family. Homotetramer. The cofactor is FMNH2.

It catalyses the reaction 5-O-(1-carboxyvinyl)-3-phosphoshikimate = chorismate + phosphate. It participates in metabolic intermediate biosynthesis; chorismate biosynthesis; chorismate from D-erythrose 4-phosphate and phosphoenolpyruvate: step 7/7. Functionally, catalyzes the anti-1,4-elimination of the C-3 phosphate and the C-6 proR hydrogen from 5-enolpyruvylshikimate-3-phosphate (EPSP) to yield chorismate, which is the branch point compound that serves as the starting substrate for the three terminal pathways of aromatic amino acid biosynthesis. This reaction introduces a second double bond into the aromatic ring system. The chain is Chorismate synthase from Methylococcus capsulatus (strain ATCC 33009 / NCIMB 11132 / Bath).